Here is a 237-residue protein sequence, read N- to C-terminus: Methylthioribulose-1-phosphate dehydratase (237 aa).

A substrate-binding site is contributed by C98. The Zn(2+) site is built by H116 and H118. The active-site Proton donor/acceptor is the E140. H196 contributes to the Zn(2+) binding site.

It belongs to the aldolase class II family. MtnB subfamily. It depends on Zn(2+) as a cofactor.

It localises to the cytoplasm. It catalyses the reaction 5-(methylsulfanyl)-D-ribulose 1-phosphate = 5-methylsulfanyl-2,3-dioxopentyl phosphate + H2O. It functions in the pathway amino-acid biosynthesis; L-methionine biosynthesis via salvage pathway; L-methionine from S-methyl-5-thio-alpha-D-ribose 1-phosphate: step 2/6. Its function is as follows. Catalyzes the dehydration of methylthioribulose-1-phosphate (MTRu-1-P) into 2,3-diketo-5-methylthiopentyl-1-phosphate (DK-MTP-1-P). In Laccaria bicolor (strain S238N-H82 / ATCC MYA-4686) (Bicoloured deceiver), this protein is Methylthioribulose-1-phosphate dehydratase.